A 424-amino-acid polypeptide reads, in one-letter code: Delta(14)-sterol reductase erg24 (424 aa).

The next 2 membrane-spanning stretches (helical) occupy residues 19–39 and 112–132; these read IGALGVTVLTTVVSFGSFYIC and LILGVVCTSIYLLGASCMEFI. Residues Lys317, Arg321, Leu344, Trp349, and 356–357 contribute to the NADP(+) site; that span reads NY. The helical transmembrane segment at 370–390 threads the bilayer; it reads PAGFGSPIPYFYVAYFGVLLV. Residues Asp396, 400-404, and Tyr411 each bind NADP(+); that span reads CRVKY.

This sequence belongs to the ERG4/ERG24 family.

It localises to the endoplasmic reticulum membrane. It carries out the reaction 4,4-dimethyl-5alpha-cholesta-8,24-dien-3beta-ol + NADP(+) = 4,4-dimethyl-5alpha-cholesta-8,14,24-trien-3beta-ol + NADPH + H(+). The protein operates within steroid biosynthesis; zymosterol biosynthesis; zymosterol from lanosterol: step 2/6. It participates in steroid metabolism; ergosterol biosynthesis. In terms of biological role, delta(14)-sterol reductase; part of the third module of ergosterol biosynthesis pathway that includes by the late steps of the pathway. Erg24 reduces the C14=C15 double bond of 4,4-dimethyl-cholesta-8,14,24-trienol to produce 4,4-dimethyl-cholesta-8,24-dienol. The third module or late pathway involves the ergosterol synthesis itself through consecutive reactions that mainly occur in the endoplasmic reticulum (ER) membrane. Firstly, the squalene synthase erg9 catalyzes the condensation of 2 farnesyl pyrophosphate moieties to form squalene, which is the precursor of all steroids. Secondly, squalene is converted into lanosterol by the consecutive action of the squalene epoxidase erg1 and the lanosterol synthase erg7. The lanosterol 14-alpha-demethylase erg11/cyp1 catalyzes C14-demethylation of lanosterol to produce 4,4'-dimethyl cholesta-8,14,24-triene-3-beta-ol. In the next steps, a complex process involving various demethylation, reduction and desaturation reactions catalyzed by the C-14 reductase erg24 and the C-4 demethylation complex erg25-erg26-erg27 leads to the production of zymosterol. Erg28 likely functions in the C-4 demethylation complex reaction by tethering erg26 and Erg27 to the endoplasmic reticulum or to facilitate interaction between these proteins. Then, the sterol 24-C-methyltransferase erg6 catalyzes the methyl transfer from S-adenosyl-methionine to the C-24 of zymosterol to form fecosterol. The C-8 sterol isomerase erg2 catalyzes the reaction which results in unsaturation at C-7 in the B ring of sterols and thus converts fecosterol to episterol. The sterol-C5-desaturases erg31 and erg32 then catalyze the introduction of a C-5 double bond in the B ring to produce 5-dehydroepisterol. The C-22 sterol desaturase erg5 further converts 5-dehydroepisterol into ergosta-5,7,22,24(28)-tetraen-3beta-ol by forming the C-22(23) double bond in the sterol side chain. Finally, ergosta-5,7,22,24(28)-tetraen-3beta-ol is substrate of the C-24(28) sterol reductase erg4 to produce ergosterol. In the genus Schizosaccharomyces, a second route exists between lanosterol and fecosterol, via the methylation of lanosterol to eburicol by erg6, followed by C14-demethylation by erg11/cyp1 and C4-demethylation by the demethylation complex erg25-erg26-erg27. This Schizosaccharomyces pombe (strain 972 / ATCC 24843) (Fission yeast) protein is Delta(14)-sterol reductase erg24.